A 131-amino-acid chain; its full sequence is Peptide methionine sulfoxide reductase MsrB (131 aa).

Residues 8–130 (LDEWRSMLDP…NSVCIDLRPR (123 aa)) form the MsrB domain. Cys-47, Cys-50, Cys-96, and Cys-99 together coordinate Zn(2+). Cys-119 acts as the Nucleophile in catalysis.

This sequence belongs to the MsrB Met sulfoxide reductase family. Requires Zn(2+) as cofactor.

It carries out the reaction L-methionyl-[protein] + [thioredoxin]-disulfide + H2O = L-methionyl-(R)-S-oxide-[protein] + [thioredoxin]-dithiol. This Pseudomonas putida (strain ATCC 700007 / DSM 6899 / JCM 31910 / BCRC 17059 / LMG 24140 / F1) protein is Peptide methionine sulfoxide reductase MsrB.